A 339-amino-acid chain; its full sequence is Ubiquitin carboxyl-terminal hydrolase 50 (339 aa).

The 296-residue stretch at T44–A339 folds into the USP domain. C53 serves as the catalytic Nucleophile. H327 acts as the Proton acceptor in catalysis.

This sequence belongs to the peptidase C19 family. As to expression, weakly expressed in a few tissues.

It localises to the cytoplasm. It is found in the cytoskeleton. Its subcellular location is the microtubule organizing center. The protein localises to the centrosome. The protein resides in the nucleus. It catalyses the reaction Thiol-dependent hydrolysis of ester, thioester, amide, peptide and isopeptide bonds formed by the C-terminal Gly of ubiquitin (a 76-residue protein attached to proteins as an intracellular targeting signal).. Functionally, deubiquitinating enzyme that removes conjugated ubiquitin from specific proteins to regulate different cellular processes. Regulates the inflammasome signaling pathway by deubiquitinating 'Lys-63'-linked polyubiquitination of the PYCARD/ASC adapter protein. Regulates the ubiquitination and stability of the ACE2 protein. Acts as a negative regulator of the G2/M checkpoint pathway, by preventing serine/threonine kinase WEE1 degradation, thereby repressing entry into mitosis following activation of the G2/M DNA damage checkpoint. This chain is Ubiquitin carboxyl-terminal hydrolase 50, found in Homo sapiens (Human).